Here is a 499-residue protein sequence, read N- to C-terminus: Probable cytosol aminopeptidase (499 aa).

2 residues coordinate Mn(2+): Lys-267 and Asp-272. The active site involves Lys-279. Mn(2+) contacts are provided by Asp-290, Asp-349, and Glu-351. Residue Arg-353 is part of the active site.

It belongs to the peptidase M17 family. It depends on Mn(2+) as a cofactor.

The protein localises to the cytoplasm. It carries out the reaction Release of an N-terminal amino acid, Xaa-|-Yaa-, in which Xaa is preferably Leu, but may be other amino acids including Pro although not Arg or Lys, and Yaa may be Pro. Amino acid amides and methyl esters are also readily hydrolyzed, but rates on arylamides are exceedingly low.. The catalysed reaction is Release of an N-terminal amino acid, preferentially leucine, but not glutamic or aspartic acids.. Functionally, presumably involved in the processing and regular turnover of intracellular proteins. Catalyzes the removal of unsubstituted N-terminal amino acids from various peptides. This Alkaliphilus oremlandii (strain OhILAs) (Clostridium oremlandii (strain OhILAs)) protein is Probable cytosol aminopeptidase.